Consider the following 665-residue polypeptide: Glycine--tRNA ligase beta subunit (665 aa).

This sequence belongs to the class-II aminoacyl-tRNA synthetase family. As to quaternary structure, tetramer of two alpha and two beta subunits.

It is found in the cytoplasm. It carries out the reaction tRNA(Gly) + glycine + ATP = glycyl-tRNA(Gly) + AMP + diphosphate. This Rickettsia prowazekii (strain Madrid E) protein is Glycine--tRNA ligase beta subunit (glyS).